Here is an 83-residue protein sequence, read N- to C-terminus: U1-theraphotoxin-Hs1f (83 aa).

Residues 1–21 (MKVTLIAILTCAAVLVLHTTA) form the signal peptide. A propeptide spanning residues 22–48 (AEELEESQLMEVGMPDTELAAVDEERL) is cleaved from the precursor. 3 disulfides stabilise this stretch: C51/C64, C55/C75, and C69/C80.

Belongs to the neurotoxin 12 (Hwtx-2) family. 02 (Hwtx-2) subfamily. Expressed by the venom gland.

It localises to the secreted. In terms of biological role, lethal neurotoxin that blocks neuromuscular transmission. In Cyriopagopus schmidti (Chinese bird spider), this protein is U1-theraphotoxin-Hs1f.